A 439-amino-acid polypeptide reads, in one-letter code: tRNA modification GTPase MnmE (439 aa).

Arg-26, Glu-88, and Arg-127 together coordinate (6S)-5-formyl-5,6,7,8-tetrahydrofolate. In terms of domain architecture, TrmE-type G spans Gly-220–Ile-367. Position 230 (Asn-230) interacts with K(+). GTP-binding positions include Asn-230 to Ser-235, Thr-249 to Thr-255, and Asp-274 to Gly-277. Ser-234 contacts Mg(2+). Positions 249, 251, and 254 each coordinate K(+). Residue Thr-255 participates in Mg(2+) binding. Lys-439 contacts (6S)-5-formyl-5,6,7,8-tetrahydrofolate.

Belongs to the TRAFAC class TrmE-Era-EngA-EngB-Septin-like GTPase superfamily. TrmE GTPase family. In terms of assembly, homodimer. Heterotetramer of two MnmE and two MnmG subunits. K(+) serves as cofactor.

The protein resides in the cytoplasm. Its function is as follows. Exhibits a very high intrinsic GTPase hydrolysis rate. Involved in the addition of a carboxymethylaminomethyl (cmnm) group at the wobble position (U34) of certain tRNAs, forming tRNA-cmnm(5)s(2)U34. The chain is tRNA modification GTPase MnmE from Deinococcus geothermalis (strain DSM 11300 / CIP 105573 / AG-3a).